A 337-amino-acid polypeptide reads, in one-letter code: Glycerol-3-phosphate dehydrogenase [NAD(P)+] (337 aa).

Positions 11, 30, and 113 each coordinate NADPH. K113, G141, and S143 together coordinate sn-glycerol 3-phosphate. Residue A145 coordinates NADPH. The sn-glycerol 3-phosphate site is built by K196, D249, S259, R260, and N261. Residue K196 is the Proton acceptor of the active site. An NADPH-binding site is contributed by R260. Residues V284 and E286 each coordinate NADPH.

It belongs to the NAD-dependent glycerol-3-phosphate dehydrogenase family.

The protein resides in the cytoplasm. The catalysed reaction is sn-glycerol 3-phosphate + NAD(+) = dihydroxyacetone phosphate + NADH + H(+). The enzyme catalyses sn-glycerol 3-phosphate + NADP(+) = dihydroxyacetone phosphate + NADPH + H(+). It participates in membrane lipid metabolism; glycerophospholipid metabolism. Its function is as follows. Catalyzes the reduction of the glycolytic intermediate dihydroxyacetone phosphate (DHAP) to sn-glycerol 3-phosphate (G3P), the key precursor for phospholipid synthesis. The polypeptide is Glycerol-3-phosphate dehydrogenase [NAD(P)+] (Leptothrix cholodnii (strain ATCC 51168 / LMG 8142 / SP-6) (Leptothrix discophora (strain SP-6))).